A 210-amino-acid polypeptide reads, in one-letter code: 2,3-bisphosphoglycerate-dependent phosphoglycerate mutase (210 aa).

Residues 9–16, 22–23, arginine 61, 88–91, lysine 99, 115–116, and 159–160 each bind substrate; these read RHGQSEWN, TG, ERDY, RR, and GN. The active-site Tele-phosphohistidine intermediate is histidine 10. Glutamate 88 functions as the Proton donor/acceptor in the catalytic mechanism.

The protein belongs to the phosphoglycerate mutase family. BPG-dependent PGAM subfamily. Homodimer.

The catalysed reaction is (2R)-2-phosphoglycerate = (2R)-3-phosphoglycerate. The protein operates within carbohydrate degradation; glycolysis; pyruvate from D-glyceraldehyde 3-phosphate: step 3/5. In terms of biological role, catalyzes the interconversion of 2-phosphoglycerate and 3-phosphoglycerate. This is 2,3-bisphosphoglycerate-dependent phosphoglycerate mutase from Parvibaculum lavamentivorans (strain DS-1 / DSM 13023 / NCIMB 13966).